A 331-amino-acid polypeptide reads, in one-letter code: Ribosomal RNA small subunit methyltransferase H (331 aa).

S-adenosyl-L-methionine is bound by residues 56–58, D76, F100, D122, and Q129; that span reads GGH.

It belongs to the methyltransferase superfamily. RsmH family.

It is found in the cytoplasm. The catalysed reaction is cytidine(1402) in 16S rRNA + S-adenosyl-L-methionine = N(4)-methylcytidine(1402) in 16S rRNA + S-adenosyl-L-homocysteine + H(+). Specifically methylates the N4 position of cytidine in position 1402 (C1402) of 16S rRNA. The sequence is that of Ribosomal RNA small subunit methyltransferase H from Chromohalobacter salexigens (strain ATCC BAA-138 / DSM 3043 / CIP 106854 / NCIMB 13768 / 1H11).